The primary structure comprises 153 residues: NAD(P)H-quinone oxidoreductase subunit N (153 aa).

The protein belongs to the complex I NdhN subunit family. As to quaternary structure, NDH-1 can be composed of about 15 different subunits; different subcomplexes with different compositions have been identified which probably have different functions.

The protein resides in the cellular thylakoid membrane. It carries out the reaction a plastoquinone + NADH + (n+1) H(+)(in) = a plastoquinol + NAD(+) + n H(+)(out). It catalyses the reaction a plastoquinone + NADPH + (n+1) H(+)(in) = a plastoquinol + NADP(+) + n H(+)(out). Its function is as follows. NDH-1 shuttles electrons from an unknown electron donor, via FMN and iron-sulfur (Fe-S) centers, to quinones in the respiratory and/or the photosynthetic chain. The immediate electron acceptor for the enzyme in this species is believed to be plastoquinone. Couples the redox reaction to proton translocation, and thus conserves the redox energy in a proton gradient. Cyanobacterial NDH-1 also plays a role in inorganic carbon-concentration. The chain is NAD(P)H-quinone oxidoreductase subunit N from Synechococcus sp. (strain RCC307).